We begin with the raw amino-acid sequence, 311 residues long: Pyrimidine-specific ribonucleoside hydrolase RihA (311 aa).

The active site involves H240.

It belongs to the IUNH family. RihA subfamily.

Hydrolyzes cytidine or uridine to ribose and cytosine or uracil, respectively. This is Pyrimidine-specific ribonucleoside hydrolase RihA from Salmonella newport (strain SL254).